A 206-amino-acid polypeptide reads, in one-letter code: Small ribosomal subunit protein uS4 (206 aa).

In terms of domain architecture, S4 RNA-binding spans 96–156; that stretch reads RRLDNVVYRM…DKSKNQSRIK (61 aa).

This sequence belongs to the universal ribosomal protein uS4 family. Part of the 30S ribosomal subunit. Contacts protein S5. The interaction surface between S4 and S5 is involved in control of translational fidelity.

One of the primary rRNA binding proteins, it binds directly to 16S rRNA where it nucleates assembly of the body of the 30S subunit. In terms of biological role, with S5 and S12 plays an important role in translational accuracy. The polypeptide is Small ribosomal subunit protein uS4 (Buchnera aphidicola subsp. Schizaphis graminum (strain Sg)).